A 144-amino-acid polypeptide reads, in one-letter code: Large ribosomal subunit protein uL11 (144 aa).

This sequence belongs to the universal ribosomal protein uL11 family. In terms of assembly, part of the ribosomal stalk of the 50S ribosomal subunit. Interacts with L10 and the large rRNA to form the base of the stalk. L10 forms an elongated spine to which L12 dimers bind in a sequential fashion forming a multimeric L10(L12)X complex. Post-translationally, one or more lysine residues are methylated.

Forms part of the ribosomal stalk which helps the ribosome interact with GTP-bound translation factors. This chain is Large ribosomal subunit protein uL11, found in Streptomyces griseus subsp. griseus (strain JCM 4626 / CBS 651.72 / NBRC 13350 / KCC S-0626 / ISP 5235).